The chain runs to 1167 residues: mRNA 3'-end-processing protein rna-14 (1167 aa).

The disordered stretch occupies residues 1-245 (MSDDYDPTNI…DPTPVTQPAP (245 aa)). 2 stretches are compositionally biased toward acidic residues: residues 16 to 26 (EEQEDYGEADG) and 70 to 79 (NTDDVGDDYD). Low complexity predominate over residues 102–111 (TAPQPAAPVA). A compositionally biased stretch (acidic residues) spans 124 to 137 (DSDDEDEDGDDDGE). 2 stretches are compositionally biased toward low complexity: residues 138 to 150 (PQQQ…QQQP) and 159 to 191 (GSGA…PQTA). The segment covering 192 to 218 (TLTVQDNAGATTFNAPPVPQQVSHQSG) has biased composition (polar residues). Residues 219 to 245 (ATTAAVPTTPSSAAPAVDPTPVTQPAP) are compositionally biased toward low complexity. HAT repeat units lie at residues 277 to 309 (NDID…LELS), 311 to 342 (NNFP…YIRR), 352 to 387 (QARQ…FIKF), 401 to 434 (QKMD…FEMG), 471 to 504 (TNLP…WEKS), and 518 to 550 (LYQK…WCFD). Residues 882-893 (QQQPQLPMSQRD) are compositionally biased toward polar residues. Disordered regions lie at residues 882 to 980 (QQQP…SGAG) and 1075 to 1167 (AYRE…PPPY). A compositionally biased stretch (low complexity) spans 908–922 (SPSAGPGAPFAPYAA). Over residues 924-946 (RPLDDRDYDDHPRKIARSEHDPF) the composition is skewed to basic and acidic residues. The segment covering 969–979 (GAAGAYSGSGA) has biased composition (gly residues). A compositionally biased stretch (low complexity) spans 1079–1090 (SPGPLGGRPLSP). Residues 1121 to 1134 (EPPPAAQYGVPPPA) are compositionally biased toward pro residues. Low complexity predominate over residues 1135–1151 (QYDGGWAQQQQQQQYGQ).

The protein localises to the nucleus. It localises to the cytoplasm. Component of the cleavage factor IA (CFIA) complex, which is involved in the endonucleolytic cleavage during polyadenylation-dependent pre-mRNA 3'-end formation. In Neurospora crassa (strain ATCC 24698 / 74-OR23-1A / CBS 708.71 / DSM 1257 / FGSC 987), this protein is mRNA 3'-end-processing protein rna-14 (rna-14).